A 150-amino-acid polypeptide reads, in one-letter code: C-C motif chemokine 25 (150 aa).

A signal peptide spans 1–23 (MNLWLLACLVAGFLGAWAPAVHT). 2 disulfide bridges follow: C30/C58 and C31/C75.

It belongs to the intercrine beta (chemokine CC) family. In terms of tissue distribution, specifically expressed by thymic dendritic cells. High levels in thymus and small intestine.

It localises to the secreted. Potentially involved in T-cell development. Recombinant protein shows chemotactic activity on thymocytes, macrophages, THP-1 cells, and dendritics cells but is inactive on peripheral blood lymphocytes and neutrophils. Binds to CCR9. Isoform 2 is an antagonist of isoform 1. Binds to atypical chemokine receptor ACKR4 and mediates the recruitment of beta-arrestin (ARRB1/2) to ACKR4. The polypeptide is C-C motif chemokine 25 (CCL25) (Homo sapiens (Human)).